The primary structure comprises 140 residues: Protein ARABIDOPSIS THALIANA ANTHER 7 (140 aa).

The signal sequence occupies residues methionine 1–serine 20. Cystine bridges form between cysteine 29–cysteine 87, cysteine 39–cysteine 54, cysteine 55–cysteine 111, and cysteine 85–cysteine 125.

This sequence belongs to the plant LTP family. As to expression, tapetum-specific. Also present in pollen.

Its subcellular location is the endoplasmic reticulum lumen. In Arabidopsis thaliana (Mouse-ear cress), this protein is Protein ARABIDOPSIS THALIANA ANTHER 7.